Here is a 170-residue protein sequence, read N- to C-terminus: Large ribosomal subunit protein uL10 (170 aa).

Belongs to the universal ribosomal protein uL10 family. In terms of assembly, part of the ribosomal stalk of the 50S ribosomal subunit. The N-terminus interacts with L11 and the large rRNA to form the base of the stalk. The C-terminus forms an elongated spine to which L12 dimers bind in a sequential fashion forming a multimeric L10(L12)X complex.

Its function is as follows. Forms part of the ribosomal stalk, playing a central role in the interaction of the ribosome with GTP-bound translation factors. The polypeptide is Large ribosomal subunit protein uL10 (Nitratiruptor sp. (strain SB155-2)).